A 249-amino-acid chain; its full sequence is UDP-N-acetyl-D-mannosaminuronic acid transferase (249 aa).

Belongs to the glycosyltransferase 26 family.

It catalyses the reaction UDP-N-acetyl-alpha-D-mannosaminouronate + N-acetyl-alpha-D-glucosaminyl-di-trans,octa-cis-undecaprenyl diphosphate = beta-D-ManNAcA-(1-&gt;4)-alpha-D-GlcNAc-di-trans,octa-cis-undecaprenyl diphosphate + UDP + H(+). Its pathway is bacterial outer membrane biogenesis; enterobacterial common antigen biosynthesis. Its function is as follows. Catalyzes the synthesis of Und-PP-GlcNAc-ManNAcA (Lipid II), the second lipid-linked intermediate involved in enterobacterial common antigen (ECA) synthesis. The sequence is that of UDP-N-acetyl-D-mannosaminuronic acid transferase from Pectobacterium atrosepticum (strain SCRI 1043 / ATCC BAA-672) (Erwinia carotovora subsp. atroseptica).